We begin with the raw amino-acid sequence, 236 residues long: Small ribosomal subunit protein uS2c (236 aa).

Belongs to the universal ribosomal protein uS2 family.

The protein localises to the plastid. Its subcellular location is the chloroplast. This Chaetosphaeridium globosum (Charophycean green alga) protein is Small ribosomal subunit protein uS2c (rps2).